The sequence spans 1096 residues: DNA-directed RNA polymerase subunit beta (1096 aa).

Residues 1070 to 1096 (LMQDVNPRRSTPSRPTYESLGSDYQED) form a disordered region.

Belongs to the RNA polymerase beta chain family. As to quaternary structure, in cyanobacteria the RNAP catalytic core is composed of 2 alpha, 1 beta, 1 beta', 1 gamma and 1 omega subunit. When a sigma factor is associated with the core the holoenzyme is formed, which can initiate transcription.

It carries out the reaction RNA(n) + a ribonucleoside 5'-triphosphate = RNA(n+1) + diphosphate. Functionally, DNA-dependent RNA polymerase catalyzes the transcription of DNA into RNA using the four ribonucleoside triphosphates as substrates. This chain is DNA-directed RNA polymerase subunit beta, found in Prochlorococcus marinus (strain MIT 9211).